We begin with the raw amino-acid sequence, 349 residues long: Small ribosomal subunit protein uS2 (349 aa).

It belongs to the universal ribosomal protein uS2 family.

In Methylobacterium sp. (strain 4-46), this protein is Small ribosomal subunit protein uS2.